A 452-amino-acid polypeptide reads, in one-letter code: Argininosuccinate lyase (452 aa).

The disordered stretch occupies residues 431–452 (AFRKDSTGSTSPKWSFRAMRRA).

This sequence belongs to the lyase 1 family. Argininosuccinate lyase subfamily.

It localises to the cytoplasm. The enzyme catalyses 2-(N(omega)-L-arginino)succinate = fumarate + L-arginine. It functions in the pathway amino-acid biosynthesis; L-arginine biosynthesis; L-arginine from L-ornithine and carbamoyl phosphate: step 3/3. The polypeptide is Argininosuccinate lyase (Tremblaya princeps).